Reading from the N-terminus, the 100-residue chain is Large ribosomal subunit protein bL21 (100 aa).

This sequence belongs to the bacterial ribosomal protein bL21 family. As to quaternary structure, part of the 50S ribosomal subunit. Contacts protein L20.

Its function is as follows. This protein binds to 23S rRNA in the presence of protein L20. The sequence is that of Large ribosomal subunit protein bL21 from Paramagnetospirillum magneticum (strain ATCC 700264 / AMB-1) (Magnetospirillum magneticum).